The sequence spans 247 residues: tRNA pseudouridine synthase A (247 aa).

The Nucleophile role is filled by D53. Y111 contributes to the substrate binding site.

The protein belongs to the tRNA pseudouridine synthase TruA family. As to quaternary structure, homodimer.

It carries out the reaction uridine(38/39/40) in tRNA = pseudouridine(38/39/40) in tRNA. In terms of biological role, formation of pseudouridine at positions 38, 39 and 40 in the anticodon stem and loop of transfer RNAs. This chain is tRNA pseudouridine synthase A, found in Bacillus velezensis (strain DSM 23117 / BGSC 10A6 / LMG 26770 / FZB42) (Bacillus amyloliquefaciens subsp. plantarum).